We begin with the raw amino-acid sequence, 236 residues long: Protein YIPF6 (236 aa).

Ala-2 carries the post-translational modification N-acetylalanine. Residues Ala-2–Thr-84 lie on the Cytoplasmic side of the membrane. Ser-7 carries the phosphoserine modification. A helical membrane pass occupies residues Leu-85 to Leu-105. Over Gln-106–Asp-115 the chain is Lumenal. Residues Gly-116 to Leu-136 form a helical membrane-spanning segment. The Cytoplasmic segment spans residues Asn-137–Ser-146. A helical transmembrane segment spans residues Phe-147 to Ile-167. Topologically, residues Cys-168 to Arg-184 are lumenal. Residues Leu-185–Asp-205 form a helical membrane-spanning segment. The Cytoplasmic portion of the chain corresponds to Ser-206–Arg-212. Residues Ala-213–Phe-233 form a helical membrane-spanning segment. The Lumenal segment spans residues Thr-234 to Gln-236.

The protein belongs to the YIP1 family. As to quaternary structure, predominantly interacts with YIPF1 or YIPF2, but may also form a ternary complex with YIPF1 and YIPF2. This interaction may stabilize YIPF1 and YIPF2.

The protein localises to the golgi apparatus membrane. Its function is as follows. May be required for stable YIPF1 and YIPF2 protein expression. In Homo sapiens (Human), this protein is Protein YIPF6 (YIPF6).